Reading from the N-terminus, the 196-residue chain is Carnitine operon protein CaiE (196 aa).

The interval 173–196 (TQPLRQMEGNRPRLQGTTDVAPKR) is disordered.

This sequence belongs to the transferase hexapeptide repeat family.

It participates in amine and polyamine metabolism; carnitine metabolism. Functionally, overproduction of CaiE stimulates the activity of CaiB and CaiD. The sequence is that of Carnitine operon protein CaiE from Escherichia coli (strain SMS-3-5 / SECEC).